Reading from the N-terminus, the 82-residue chain is ATP synthase subunit c, chloroplastic (82 aa).

2 helical membrane-spanning segments follow: residues Pro3–Gly23 and Leu57–Ala77.

It belongs to the ATPase C chain family. As to quaternary structure, F-type ATPases have 2 components, F(1) - the catalytic core - and F(0) - the membrane proton channel. F(1) has five subunits: alpha(3), beta(3), gamma(1), delta(1), epsilon(1). F(0) has four main subunits: a(1), b(1), b'(1) and c(10-14). The alpha and beta chains form an alternating ring which encloses part of the gamma chain. F(1) is attached to F(0) by a central stalk formed by the gamma and epsilon chains, while a peripheral stalk is formed by the delta, b and b' chains.

Its subcellular location is the plastid. It localises to the chloroplast thylakoid membrane. F(1)F(0) ATP synthase produces ATP from ADP in the presence of a proton or sodium gradient. F-type ATPases consist of two structural domains, F(1) containing the extramembraneous catalytic core and F(0) containing the membrane proton channel, linked together by a central stalk and a peripheral stalk. During catalysis, ATP synthesis in the catalytic domain of F(1) is coupled via a rotary mechanism of the central stalk subunits to proton translocation. Functionally, key component of the F(0) channel; it plays a direct role in translocation across the membrane. A homomeric c-ring of between 10-14 subunits forms the central stalk rotor element with the F(1) delta and epsilon subunits. This is ATP synthase subunit c, chloroplastic from Nephroselmis olivacea (Green alga).